A 102-amino-acid chain; its full sequence is Large ribosomal subunit protein uL24 (102 aa).

The protein belongs to the universal ribosomal protein uL24 family. Part of the 50S ribosomal subunit.

In terms of biological role, one of two assembly initiator proteins, it binds directly to the 5'-end of the 23S rRNA, where it nucleates assembly of the 50S subunit. Functionally, one of the proteins that surrounds the polypeptide exit tunnel on the outside of the subunit. In Rhizobium johnstonii (strain DSM 114642 / LMG 32736 / 3841) (Rhizobium leguminosarum bv. viciae), this protein is Large ribosomal subunit protein uL24.